The primary structure comprises 307 residues: Ornithine carbamoyltransferase (307 aa).

Carbamoyl phosphate is bound by residues 50–53 (STRT), Gln-77, Arg-101, and 128–131 (HPCQ). L-ornithine-binding positions include Asn-160, Asp-224, and 228-229 (SM). Residues 264-265 (CL) and Arg-292 contribute to the carbamoyl phosphate site.

It belongs to the aspartate/ornithine carbamoyltransferase superfamily. OTCase family.

It localises to the cytoplasm. The enzyme catalyses carbamoyl phosphate + L-ornithine = L-citrulline + phosphate + H(+). Its pathway is amino-acid biosynthesis; L-arginine biosynthesis; L-arginine from L-ornithine and carbamoyl phosphate: step 1/3. Functionally, reversibly catalyzes the transfer of the carbamoyl group from carbamoyl phosphate (CP) to the N(epsilon) atom of ornithine (ORN) to produce L-citrulline. The sequence is that of Ornithine carbamoyltransferase from Clavibacter sepedonicus (Clavibacter michiganensis subsp. sepedonicus).